A 1087-amino-acid polypeptide reads, in one-letter code: Exportin-7 (1087 aa).

At Ala-2 the chain carries N-acetylalanine. The 67-residue stretch at 30–96 (AEKALVEFTN…RNYVLNYLAT (67 aa)) folds into the Importin N-terminal domain. At Ser-570 the chain carries Phosphoserine.

Belongs to the exportin family. In terms of assembly, binds to nucleoporins. Found in a complex with XPO7, EIF4A1, ARHGAP1, VPS26A, VPS29, VPS35 and SFN. Interacts with ARHGAP1 and SFN. Interacts with Ran and cargo proteins in a GTP-dependent manner.

The protein resides in the cytoplasm. Its subcellular location is the nucleus. It localises to the nuclear pore complex. Functionally, mediates the nuclear export of proteins (cargos) with broad substrate specificity. In the nucleus binds cooperatively to its cargo and to the GTPase Ran in its active GTP-bound form. Docking of this trimeric complex to the nuclear pore complex (NPC) is mediated through binding to nucleoporins. Upon transit of a nuclear export complex into the cytoplasm, disassembling of the complex and hydrolysis of Ran-GTP to Ran-GDP (induced by RANBP1 and RANGAP1, respectively) cause release of the cargo from the export receptor. XPO7 then return to the nuclear compartment and mediate another round of transport. The directionality of nuclear export is thought to be conferred by an asymmetric distribution of the GTP- and GDP-bound forms of Ran between the cytoplasm and nucleus. The chain is Exportin-7 (XPO7) from Pongo abelii (Sumatran orangutan).